A 1088-amino-acid chain; its full sequence is RNA-directed RNA polymerase (1088 aa).

In terms of domain architecture, RdRp catalytic spans 501–687; sequence LSYGDVTRFL…AKRYIAGGKI (187 aa).

Belongs to the reoviridae RNA-directed RNA polymerase family. Interacts with VP3 (Potential). Interacts with VP2; this interaction activates VP1. Interacts with NSP5; this interaction is probably necessary for the formation of functional virus factories. Interacts with NSP2; this interaction is weak. Mg(2+) serves as cofactor.

It localises to the virion. It carries out the reaction RNA(n) + a ribonucleoside 5'-triphosphate = RNA(n+1) + diphosphate. RNA-directed RNA polymerase that is involved in both transcription and genome replication. Together with VP3 capping enzyme, forms an enzyme complex positioned near the channels situated at each of the five-fold vertices of the core. Following infection, the outermost layer of the virus is lost, leaving a double-layered particle (DLP) made up of the core and VP6 shell. VP1 then catalyzes the transcription of fully conservative plus-strand genomic RNAs that are extruded through the DLP's channels into the cytoplasm where they function as mRNAs for translation of viral proteins. One copy of each of the viral (+)RNAs is also recruited during core assembly, together with newly synthesized polymerase complexes and VP2. The polymerase of these novo-formed particles catalyzes the synthesis of complementary minus-strands leading to dsRNA formation. To do so, the polymerase specifically recognizes and binds 4 bases 5'-UGUG-3' in the conserved 3'-sequence of plus-strand RNA templates. VP2 presumably activates the autoinhibited VP1-RNA complex to coordinate packaging and genome replication. Once dsRNA synthesis is complete, the polymerase switches to the transcriptional mode, thus providing secondary transcription. This Bos taurus (Bovine) protein is RNA-directed RNA polymerase.